The chain runs to 360 residues: Peptide chain release factor 1 (360 aa).

Position 234 is an N5-methylglutamine (glutamine 234).

This sequence belongs to the prokaryotic/mitochondrial release factor family. In terms of processing, methylated by PrmC. Methylation increases the termination efficiency of RF1.

The protein localises to the cytoplasm. Peptide chain release factor 1 directs the termination of translation in response to the peptide chain termination codons UAG and UAA. In Renibacterium salmoninarum (strain ATCC 33209 / DSM 20767 / JCM 11484 / NBRC 15589 / NCIMB 2235), this protein is Peptide chain release factor 1.